Here is a 580-residue protein sequence, read N- to C-terminus: Glutamine--tRNA ligase (580 aa).

The short motif at 41–51 (PEPNGYLHIGH) is the 'HIGH' region element. Residues 42–44 (EPN) and 48–54 (HIGHAKA) each bind ATP. L-glutamine-binding residues include aspartate 74 and tyrosine 218. ATP is bound by residues threonine 237, 285–286 (RL), and 293–295 (MSK). Residues 292–296 (VMSKR) carry the 'KMSKS' region motif.

Belongs to the class-I aminoacyl-tRNA synthetase family. Monomer.

It is found in the cytoplasm. The catalysed reaction is tRNA(Gln) + L-glutamine + ATP = L-glutaminyl-tRNA(Gln) + AMP + diphosphate. The chain is Glutamine--tRNA ligase from Xylella fastidiosa (strain 9a5c).